The chain runs to 387 residues: Eukaryotic translation initiation factor 3 subunit M (387 aa).

The 160-residue stretch at 181–340 (RSSKVMIELL…RKVHISSTMH (160 aa)) folds into the PCI domain.

The protein belongs to the eIF-3 subunit M family. Component of the eukaryotic translation initiation factor 3 (eIF-3) complex. The eIF-3 complex interacts with pix.

It is found in the cytoplasm. The protein resides in the golgi apparatus. In terms of biological role, component of the eukaryotic translation initiation factor 3 (eIF-3) complex, which is involved in protein synthesis of a specialized repertoire of mRNAs and, together with other initiation factors, stimulates binding of mRNA and methionyl-tRNAi to the 40S ribosome. The eIF-3 complex specifically targets and initiates translation of a subset of mRNAs involved in cell proliferation. The sequence is that of Eukaryotic translation initiation factor 3 subunit M from Drosophila willistoni (Fruit fly).